The chain runs to 217 residues: N-(5'-phosphoribosyl)anthranilate isomerase (217 aa).

It belongs to the TrpF family.

It catalyses the reaction N-(5-phospho-beta-D-ribosyl)anthranilate = 1-(2-carboxyphenylamino)-1-deoxy-D-ribulose 5-phosphate. It participates in amino-acid biosynthesis; L-tryptophan biosynthesis; L-tryptophan from chorismate: step 3/5. This is N-(5'-phosphoribosyl)anthranilate isomerase from Synechococcus elongatus (strain ATCC 33912 / PCC 7942 / FACHB-805) (Anacystis nidulans R2).